The sequence spans 177 residues: RNA pyrophosphohydrolase (177 aa).

Positions 6 to 149 (GYRPNVGIVI…KRDVYRRVMK (144 aa)) constitute a Nudix hydrolase domain. The Nudix box motif lies at 38-59 (GGINPGESPEQAMYRELFEEVG).

The protein belongs to the Nudix hydrolase family. RppH subfamily. It depends on a divalent metal cation as a cofactor.

Its function is as follows. Accelerates the degradation of transcripts by removing pyrophosphate from the 5'-end of triphosphorylated RNA, leading to a more labile monophosphorylated state that can stimulate subsequent ribonuclease cleavage. This Pectobacterium atrosepticum (strain SCRI 1043 / ATCC BAA-672) (Erwinia carotovora subsp. atroseptica) protein is RNA pyrophosphohydrolase.